We begin with the raw amino-acid sequence, 738 residues long: DNA repair and recombination protein RAD54-like (738 aa).

The disordered stretch occupies residues 1-31; the sequence is MRRSLAPSQVAKRKQGPDSDDEEDWEPDMEP. The segment covering 18 to 29 has biased composition (acidic residues); it reads DSDDEEDWEPDM. One can recognise a Helicase ATP-binding domain in the interval 164 to 339; sequence GRRIENSYGC…FSLVHFVNSG (176 aa). 177–184 contributes to the ATP binding site; it reads DEMGLGKT. Positions 290 to 293 match the DEAH box motif; it reads DEGH. The Helicase C-terminal domain maps to 493–647; it reads LVLDYILAMT…CVVDEEQDVE (155 aa). Phosphoserine is present on residues Ser566 and Ser567.

In terms of assembly, homohexamer. Interacts with RAD51. Post-translationally, phosphorylated. Phosphorylations at Ser-566 and Ser-567 allow efficient removal of RAD51 filaments from DNA.

The catalysed reaction is ATP + H2O = ADP + phosphate + H(+). Plays an essential role in homologous recombination (HR) which is a major pathway for repairing DNA double-strand breaks (DSBs), single-stranded DNA (ssDNA) gaps, and stalled or collapsed replication forks. Acts as a molecular motor during the homology search and guides RAD51 ssDNA along a donor dsDNA thereby changing the homology search from the diffusion-based mechanism to a motor-guided mechanism. Also plays an essential role in RAD51-mediated synaptic complex formation which consists of three strands encased in a protein filament formed once homology is recognized. Once DNA strand exchange occured, dissociates RAD51 from nucleoprotein filaments formed on dsDNA. The polypeptide is DNA repair and recombination protein RAD54-like (rad54l) (Danio rerio (Zebrafish)).